We begin with the raw amino-acid sequence, 191 residues long: Outer membrane lipoprotein DolP (191 aa).

The first 18 residues, Met1–Gly18, serve as a signal peptide directing secretion. Cys19 carries N-palmitoyl cysteine lipidation. A lipid anchor (S-diacylglycerol cysteine) is attached at Cys19. 2 BON domains span residues Asp46–Gln115 and Asn124–Lys191.

Belongs to the lipoprotein DolP family.

Its subcellular location is the cell outer membrane. Its function is as follows. Plays an important role in maintaining outer membrane integrity. The sequence is that of Outer membrane lipoprotein DolP from Escherichia coli O157:H7.